A 449-amino-acid chain; its full sequence is UDP-N-acetylmuramoylalanine--D-glutamate ligase (449 aa).

118–124 (GTNGKTT) serves as a coordination point for ATP.

It belongs to the MurCDEF family.

The protein resides in the cytoplasm. It carries out the reaction UDP-N-acetyl-alpha-D-muramoyl-L-alanine + D-glutamate + ATP = UDP-N-acetyl-alpha-D-muramoyl-L-alanyl-D-glutamate + ADP + phosphate + H(+). It functions in the pathway cell wall biogenesis; peptidoglycan biosynthesis. Cell wall formation. Catalyzes the addition of glutamate to the nucleotide precursor UDP-N-acetylmuramoyl-L-alanine (UMA). The sequence is that of UDP-N-acetylmuramoylalanine--D-glutamate ligase from Staphylococcus epidermidis (strain ATCC 12228 / FDA PCI 1200).